We begin with the raw amino-acid sequence, 371 residues long: Putative glutamate--cysteine ligase 2 (371 aa).

This sequence belongs to the glutamate--cysteine ligase type 2 family. YbdK subfamily.

It carries out the reaction L-cysteine + L-glutamate + ATP = gamma-L-glutamyl-L-cysteine + ADP + phosphate + H(+). Functionally, ATP-dependent carboxylate-amine ligase which exhibits weak glutamate--cysteine ligase activity. In Burkholderia mallei (strain NCTC 10247), this protein is Putative glutamate--cysteine ligase 2.